We begin with the raw amino-acid sequence, 284 residues long: Ribosomal RNA small subunit methyltransferase A (284 aa).

The S-adenosyl-L-methionine site is built by His-12, Leu-14, Gly-47, Glu-68, Asp-93, and Asn-118.

This sequence belongs to the class I-like SAM-binding methyltransferase superfamily. rRNA adenine N(6)-methyltransferase family. RsmA subfamily.

It localises to the cytoplasm. It catalyses the reaction adenosine(1518)/adenosine(1519) in 16S rRNA + 4 S-adenosyl-L-methionine = N(6)-dimethyladenosine(1518)/N(6)-dimethyladenosine(1519) in 16S rRNA + 4 S-adenosyl-L-homocysteine + 4 H(+). Specifically dimethylates two adjacent adenosines (A1518 and A1519) in the loop of a conserved hairpin near the 3'-end of 16S rRNA in the 30S particle. May play a critical role in biogenesis of 30S subunits. This Synechocystis sp. (strain ATCC 27184 / PCC 6803 / Kazusa) protein is Ribosomal RNA small subunit methyltransferase A.